The sequence spans 89 residues: Small ribosomal subunit protein uS15 (89 aa).

It belongs to the universal ribosomal protein uS15 family. Part of the 30S ribosomal subunit. Forms a bridge to the 50S subunit in the 70S ribosome, contacting the 23S rRNA.

Its function is as follows. One of the primary rRNA binding proteins, it binds directly to 16S rRNA where it helps nucleate assembly of the platform of the 30S subunit by binding and bridging several RNA helices of the 16S rRNA. In terms of biological role, forms an intersubunit bridge (bridge B4) with the 23S rRNA of the 50S subunit in the ribosome. This Streptococcus equi subsp. zooepidemicus (strain H70) protein is Small ribosomal subunit protein uS15.